A 129-amino-acid chain; its full sequence is Small ribosomal subunit protein uS9 (129 aa).

Residues 97–129 (LKAQGFLTRDPRKKERKKYGRKKARKSFQFSKR) are disordered. A compositionally biased stretch (basic residues) spans 110 to 129 (KERKKYGRKKARKSFQFSKR).

The protein belongs to the universal ribosomal protein uS9 family.

The protein is Small ribosomal subunit protein uS9 of Chlamydia trachomatis serovar A (strain ATCC VR-571B / DSM 19440 / HAR-13).